A 186-amino-acid polypeptide reads, in one-letter code: Ribosome-recycling factor (186 aa).

This sequence belongs to the RRF family.

The protein localises to the cytoplasm. Its function is as follows. Responsible for the release of ribosomes from messenger RNA at the termination of protein biosynthesis. May increase the efficiency of translation by recycling ribosomes from one round of translation to another. This chain is Ribosome-recycling factor, found in Acidovorax ebreus (strain TPSY) (Diaphorobacter sp. (strain TPSY)).